The sequence spans 469 residues: Squamosa promoter-binding-like protein 3 (469 aa).

Positions 96–118 (SAEEHDKNMDKGKSKVDDTGTSR) are disordered. Residues 97 to 115 (AEEHDKNMDKGKSKVDDTG) are compositionally biased toward basic and acidic residues. The segment at 179–256 (NPHCQVEGCN…HDHNARRRKP (78 aa)) adopts an SBP-type zinc-finger fold. The Zn(2+) site is built by cysteine 182, cysteine 187, cysteine 204, histidine 207, cysteine 223, cysteine 226, histidine 230, and cysteine 242. The short motif at 239 to 255 (KRSCRRRLHDHNARRRK) is the Bipartite nuclear localization signal element. Positions 446–469 (NDDDEDHLQLPKPSYDNSHYDQMN) are disordered. Residues 460–469 (YDNSHYDQMN) are compositionally biased toward polar residues.

Ubiquitous.

It is found in the nucleus. In terms of biological role, trans-acting factor that binds specifically to the consensus nucleotide sequence 5'-TNCGTACAA-3'. May be involved in panicle development. In Oryza sativa subsp. indica (Rice), this protein is Squamosa promoter-binding-like protein 3 (SPL3).